Here is a 300-residue protein sequence, read N- to C-terminus: Estradiol 17-beta-dehydrogenase 11 (300 aa).

An N-terminal signal peptide occupies residues 1 to 19 (MKFLLDILLLLPLLIVCSL). 40 to 64 (LITGAGHGIGRLTAYEFAKLKSKLV) is a binding site for NADP(+). Residue Ser172 participates in substrate binding. Tyr185 functions as the Proton acceptor in the catalytic mechanism.

Belongs to the short-chain dehydrogenases/reductases (SDR) family. 17-beta-HSD 3 subfamily. As to expression, present at high level in steroidogenic cells such as syncytiotrophoblasts, sebaceous gland, Leydig cells, and granulosa cells of the dominant follicle and corpus luteum. In lung, it is detected in the ciliated epithelium and in acini of adult trachea, in bronchioles, but not in alveoli. In the eye, it is detected in the nonpigmented epithelium of the ciliary body and, at lower level, in the inner nuclear layer of the retina (at protein level). Widely expressed. Highly expressed in retina, pancreas, kidney, liver, lung, adrenal, small intestine, ovary and heart.

Its subcellular location is the endoplasmic reticulum. It is found in the lipid droplet. The catalysed reaction is 17beta-estradiol + NAD(+) = estrone + NADH + H(+). It carries out the reaction 17beta-estradiol + NADP(+) = estrone + NADPH + H(+). Can convert androstan-3-alpha,17-beta-diol (3-alpha-diol) to androsterone in vitro, suggesting that it may participate in androgen metabolism during steroidogenesis. May act by metabolizing compounds that stimulate steroid synthesis and/or by generating metabolites that inhibit it. Has no activity toward DHEA (dehydroepiandrosterone), or A-dione (4-androste-3,17-dione), and only a slight activity toward testosterone to A-dione. Tumor-associated antigen in cutaneous T-cell lymphoma. The polypeptide is Estradiol 17-beta-dehydrogenase 11 (HSD17B11) (Homo sapiens (Human)).